Here is a 138-residue protein sequence, read N- to C-terminus: Acidic phospholipase A2 pgPLA 1b/pgPLA 2b (138 aa).

An N-terminal signal peptide occupies residues 1–16 (MRTLWIMAVLLVGVKG). Intrachain disulfides connect Cys42/Cys131, Cys44/Cys60, Cys59/Cys111, Cys65/Cys138, Cys66/Cys104, Cys73/Cys97, and Cys91/Cys102. Residues Tyr43, Gly45, and Gly47 each contribute to the Ca(2+) site. His63 is an active-site residue. Ca(2+) is bound at residue Asp64. Asp105 is a catalytic residue.

It belongs to the phospholipase A2 family. Group II subfamily. D49 sub-subfamily. Ca(2+) serves as cofactor. In terms of tissue distribution, expressed by the venom gland.

The protein resides in the secreted. It carries out the reaction a 1,2-diacyl-sn-glycero-3-phosphocholine + H2O = a 1-acyl-sn-glycero-3-phosphocholine + a fatty acid + H(+). Its function is as follows. PLA2 catalyzes the calcium-dependent hydrolysis of the 2-acyl groups in 3-sn-phosphoglycerides. This Protobothrops flavoviridis (Habu) protein is Acidic phospholipase A2 pgPLA 1b/pgPLA 2b.